The chain runs to 825 residues: Arabinolytic transcriptional activator araR (825 aa).

Positions 1 to 17 (MASSHQGNGTVPNSQTD) are enriched in polar residues. Positions 1–28 (MASSHQGNGTVPNSQTDAPPDSSTKRRW) are disordered. The zn(2)-C6 fungal-type DNA-binding region spans 35-61 (CDSCHARRVRCDRQFPCSRCLRSEITC). A disordered region spans residues 117 to 152 (STFHHRSPPANAPTVSAPSVDGRRSQTDPQLPVRRP).

Belongs to the xlnR/xlr1 family. araR subfamily.

The protein resides in the nucleus. Its function is as follows. Transcriptional activator of the arabinanolytic system. Involved in the regulation of extracellular arabinanolytic genes and in the regulation of the intracellular activities of L-arabinose catabolic genes in the pentose catabolic pathway (PCP) in response to the presence of L-arabinose. The polypeptide is Arabinolytic transcriptional activator araR (Emericella nidulans (strain FGSC A4 / ATCC 38163 / CBS 112.46 / NRRL 194 / M139) (Aspergillus nidulans)).